A 376-amino-acid chain; its full sequence is tRNA-specific 2-thiouridylase MnmA (376 aa).

ATP is bound by residues 14 to 21 (GMSGGVDS) and Met-40. Residues 100–102 (NPD) form an interaction with target base in tRNA region. Cys-105 serves as the catalytic Nucleophile. Cys-105 and Cys-202 are disulfide-bonded. Gly-129 serves as a coordination point for ATP. The segment at 152 to 154 (KDQ) is interaction with tRNA. Cys-202 serves as the catalytic Cysteine persulfide intermediate. Residues 315-316 (RY) form an interaction with tRNA region.

It belongs to the MnmA/TRMU family.

It is found in the cytoplasm. The catalysed reaction is S-sulfanyl-L-cysteinyl-[protein] + uridine(34) in tRNA + AH2 + ATP = 2-thiouridine(34) in tRNA + L-cysteinyl-[protein] + A + AMP + diphosphate + H(+). In terms of biological role, catalyzes the 2-thiolation of uridine at the wobble position (U34) of tRNA, leading to the formation of s(2)U34. The protein is tRNA-specific 2-thiouridylase MnmA of Lactococcus lactis subsp. cremoris (strain SK11).